A 508-amino-acid polypeptide reads, in one-letter code: Putative adenosylhomocysteinase 3 (508 aa).

Ser-4 is modified (phosphoserine). Residues 24–81 are disordered; the sequence is DQKQEFNKRPTKIGRRSLSRSISQSSTDSYSSAASYTDSSDDETSPRDKQQKNSKGSS. Over residues 32–41 the composition is skewed to basic residues; that stretch reads RPTKIGRRSL. A compositionally biased stretch (low complexity) spans 42 to 61; the sequence is SRSISQSSTDSYSSAASYTD. Residues Ser-46, Ser-49, Ser-52, and Ser-55 each carry the phosphoserine modification. Positions 133, 207, and 232 each coordinate substrate. Residue 233 to 235 participates in NAD(+) binding; the sequence is SVT. The substrate site is built by Lys-262 and Asp-266. NAD(+)-binding positions include Asn-267, 298-303, Glu-319, Asn-354, 375-377, and Asn-422; these read GEVGKG and IGH.

Belongs to the adenosylhomocysteinase family. As to quaternary structure, homotetramer. Forms heteromultimers with AHCYL1 (via the C-terminal region). Interacts with ITPR1; with lower affinity than AHCYL1 and maybe via ITPR1. Interacts with SLC4A4. Interacts with ZCCHC4. NAD(+) is required as a cofactor.

It is found in the cytoplasm. It localises to the microsome. It carries out the reaction S-adenosyl-L-homocysteine + H2O = L-homocysteine + adenosine. It participates in amino-acid biosynthesis; L-homocysteine biosynthesis; L-homocysteine from S-adenosyl-L-homocysteine: step 1/1. In terms of biological role, may regulate the electrogenic sodium/bicarbonate cotransporter SLC4A4 activity and Mg(2+)-sensitivity. On the contrary of its homolog AHCYL1, does not regulate ITPR1 sensitivity to inositol 1,4,5-trisphosphate. This chain is Putative adenosylhomocysteinase 3 (AHCYL2), found in Pongo abelii (Sumatran orangutan).